The chain runs to 339 residues: Very-long-chain 3-oxoacyl-CoA reductase (339 aa).

A helical transmembrane segment spans residues 21–41 (WTTFLLALGSFNALRIIYQTL). Positions 67, 96, 121, 148, 215, 219, 248, and 250 each coordinate NADP(+). Tyr215 functions as the Proton acceptor in the catalytic mechanism. Lys219 acts as the Lowers pKa of active site Tyr in catalysis.

Belongs to the short-chain dehydrogenases/reductases (SDR) family.

It is found in the endoplasmic reticulum membrane. The catalysed reaction is a very-long-chain (3R)-3-hydroxyacyl-CoA + NADP(+) = a very-long-chain 3-oxoacyl-CoA + NADPH + H(+). Its pathway is lipid metabolism; fatty acid biosynthesis. Component of the microsomal membrane bound fatty acid elongation system, which produces the 26-carbon very long-chain fatty acids (VLCFA) from palmitate. Catalyzes the reduction of the 3-ketoacyl-CoA intermediate that is formed in each cycle of fatty acid elongation. VLCFAs serve as precursors for ceramide and sphingolipids. The sequence is that of Very-long-chain 3-oxoacyl-CoA reductase from Coprinopsis cinerea (strain Okayama-7 / 130 / ATCC MYA-4618 / FGSC 9003) (Inky cap fungus).